The chain runs to 148 residues: Endoribonuclease YbeY (148 aa).

Zn(2+)-binding residues include histidine 113, histidine 117, and histidine 123.

It belongs to the endoribonuclease YbeY family. The cofactor is Zn(2+).

It is found in the cytoplasm. Single strand-specific metallo-endoribonuclease involved in late-stage 70S ribosome quality control and in maturation of the 3' terminus of the 16S rRNA. In Borrelia hermsii (strain HS1 / DAH), this protein is Endoribonuclease YbeY.